The following is a 37-amino-acid chain: Large ribosomal subunit protein bL36c (37 aa).

The protein belongs to the bacterial ribosomal protein bL36 family.

The protein resides in the plastid. It localises to the chloroplast. The polypeptide is Large ribosomal subunit protein bL36c (Thalassiosira pseudonana (Marine diatom)).